A 250-amino-acid polypeptide reads, in one-letter code: MLINVISIFPKMFDIIKDYGITKRAIQKHLVKINVLNPRKFTKNKYKNIDDRPYGGGPGMIMTAEPLFLAINQAKSLSSNPVKVFYLSPQGKKLDQSKIMELSHQKHIILLCGRYEGIDERLLISKIIDEEISIGDYVLSGGELPAMVLIDSICRVTPGVLKNSKAIQEDSFYNGLLDYPHYTRPKCFNCIKIPNILLSGNHSEIKRWRLKQSLTKTWLKRPDLLNKLILTKEQESILHECQSKMDKPKI.

Residues G113 and 134-139 (IGDYVL) contribute to the S-adenosyl-L-methionine site.

It belongs to the RNA methyltransferase TrmD family. In terms of assembly, homodimer.

The protein resides in the cytoplasm. The enzyme catalyses guanosine(37) in tRNA + S-adenosyl-L-methionine = N(1)-methylguanosine(37) in tRNA + S-adenosyl-L-homocysteine + H(+). Functionally, specifically methylates guanosine-37 in various tRNAs. The protein is tRNA (guanine-N(1)-)-methyltransferase of Buchnera aphidicola subsp. Baizongia pistaciae (strain Bp).